The sequence spans 124 residues: Small ribosomal subunit protein uS12 (124 aa).

The residue at position 89 (Asp-89) is a 3-methylthioaspartic acid.

This sequence belongs to the universal ribosomal protein uS12 family. Part of the 30S ribosomal subunit. Contacts proteins S8 and S17. May interact with IF1 in the 30S initiation complex.

Its function is as follows. With S4 and S5 plays an important role in translational accuracy. In terms of biological role, interacts with and stabilizes bases of the 16S rRNA that are involved in tRNA selection in the A site and with the mRNA backbone. Located at the interface of the 30S and 50S subunits, it traverses the body of the 30S subunit contacting proteins on the other side and probably holding the rRNA structure together. The combined cluster of proteins S8, S12 and S17 appears to hold together the shoulder and platform of the 30S subunit. The chain is Small ribosomal subunit protein uS12 from Psychrobacter sp. (strain PRwf-1).